Reading from the N-terminus, the 206-residue chain is GTP-binding protein YPTC5 (206 aa).

15–22 (GDSGVGKT) provides a ligand contact to GTP. Residues 37–45 (YKATIGADF) carry the Effector region motif. Residues 63–67 (DTAGQ) and 125–128 (NKID) each bind GTP. Residues C205 and C206 are each lipidated (S-geranylgeranyl cysteine).

The protein belongs to the small GTPase superfamily. Rab family.

Its subcellular location is the cell membrane. Protein transport. Probably involved in vesicular traffic. This chain is GTP-binding protein YPTC5 (YPTC5), found in Chlamydomonas reinhardtii (Chlamydomonas smithii).